Here is a 91-residue protein sequence, read N- to C-terminus: MPILKERKWELIRSFQHHDKDTGSPEVQIAILTERINKLTEHMKQNKKDLHSRRGLIAMVNKRKALLDYLKRKNYQKYLEVSEKLNLRVKN.

It belongs to the universal ribosomal protein uS15 family. In terms of assembly, part of the 30S ribosomal subunit. Forms a bridge to the 50S subunit in the 70S ribosome, contacting the 23S rRNA.

Functionally, one of the primary rRNA binding proteins, it binds directly to 16S rRNA where it helps nucleate assembly of the platform of the 30S subunit by binding and bridging several RNA helices of the 16S rRNA. In terms of biological role, forms an intersubunit bridge (bridge B4) with the 23S rRNA of the 50S subunit in the ribosome. This chain is Small ribosomal subunit protein uS15, found in Hydrogenobaculum sp. (strain Y04AAS1).